A 213-amino-acid chain; its full sequence is ATP-dependent Clp protease proteolytic subunit (213 aa).

The active-site Nucleophile is serine 114. Histidine 139 is an active-site residue.

Belongs to the peptidase S14 family. Fourteen ClpP subunits assemble into 2 heptameric rings which stack back to back to give a disk-like structure with a central cavity, resembling the structure of eukaryotic proteasomes.

It localises to the cytoplasm. It catalyses the reaction Hydrolysis of proteins to small peptides in the presence of ATP and magnesium. alpha-casein is the usual test substrate. In the absence of ATP, only oligopeptides shorter than five residues are hydrolyzed (such as succinyl-Leu-Tyr-|-NHMec, and Leu-Tyr-Leu-|-Tyr-Trp, in which cleavage of the -Tyr-|-Leu- and -Tyr-|-Trp bonds also occurs).. Functionally, cleaves peptides in various proteins in a process that requires ATP hydrolysis. Has a chymotrypsin-like activity. Plays a major role in the degradation of misfolded proteins. The sequence is that of ATP-dependent Clp protease proteolytic subunit from Pseudomonas entomophila (strain L48).